The following is an 849-amino-acid chain: Putative endoplasmic reticulum mannosidase MNL2 (849 aa).

Residues 1-12 (MSIARLVYSLFR) lie on the Cytoplasmic side of the membrane. The helical; Signal-anchor for type II membrane protein transmembrane segment at 13 to 32 (RVRSVLLLFITISLLFYYTF) threads the bilayer. Topologically, residues 33–849 (QNEIDILNSY…TQGGHIIKKK (817 aa)) are lumenal. Residue Asn45 is glycosylated (N-linked (GlcNAc...) asparagine). Residues 56-79 (HNTEGSSKLDPPDLSSTGSDRIAT) form a disordered region. A disulfide bridge connects residues Cys559 and Cys598.

The protein belongs to the glycosyl hydrolase 47 family. The cofactor is Ca(2+).

The protein resides in the endoplasmic reticulum membrane. The protein operates within protein modification; protein glycosylation. In terms of biological role, putative mannosidase involved in glycoprotein quality control since it is involved in the targeting of misfolded glycoproteins for ER-associated protein degradation (ERAD). This Saccharomyces cerevisiae (strain ATCC 204508 / S288c) (Baker's yeast) protein is Putative endoplasmic reticulum mannosidase MNL2 (MNL2).